A 315-amino-acid polypeptide reads, in one-letter code: Ribosomal RNA small subunit methyltransferase H (315 aa).

Residues 1-21 are disordered; sequence MNVVNVVPMHLPPPPPRPRGE. Residues 51 to 53, aspartate 69, phenylalanine 96, aspartate 117, and glutamine 124 contribute to the S-adenosyl-L-methionine site; that span reads GGH. The tract at residues 281 to 315 is disordered; sequence KKPVTAGDDEVEGNPRARSAKLRAARRVGGAEALA.

The protein belongs to the methyltransferase superfamily. RsmH family.

It localises to the cytoplasm. It carries out the reaction cytidine(1402) in 16S rRNA + S-adenosyl-L-methionine = N(4)-methylcytidine(1402) in 16S rRNA + S-adenosyl-L-homocysteine + H(+). Its function is as follows. Specifically methylates the N4 position of cytidine in position 1402 (C1402) of 16S rRNA. This is Ribosomal RNA small subunit methyltransferase H from Sorangium cellulosum (strain So ce56) (Polyangium cellulosum (strain So ce56)).